The chain runs to 952 residues: MAWWNKLFGDPQERKVKKYQPRVAEMNALEAEVAALSDDQLRAKTAVFQKRVADQLQGVDLDALEIRERRRRIDVALDGVISEAFAVVREAAKRVIGLRHYDVQLIGGLVLHEGQIAEMKTGEGKTLVATLPAYLNALTGRGVHIVTVNDYLARRDSEWMGQVHRFLGLSVGLIQQSMTPSERAQNYAADITYGTNSELGFDYLRDNMATNAGELVQRSFNYCIIDEVDSILVDEARTPLIISGMVAKPAEKYMRANEVATALERNTHYEVDEKQRNVTLTDEGFIAAEQMLSTEDLFSPRDPWAHFVFNAVKAKELFNKDVQYIVRNDEVVIVDEFTGRVMPGRRWSEGLHQAVEAKEMVTIQNETQTMASITYQNFFLLYPKLAGMTGTALTEEAEFGKIYSLEVTAIPTNRKVVRTDMSDQVYKTENGKWQSVAAEIAEMNKNGRPVLVGTTSVEKSEVLSALLKEKGIAHNLLNAKPENVERESEIVAQAGRKGGVTIATNMAGRGTDILLGGNPEYMARLKLKEVLFPALVIDDEDAFSPMMRLLNNGNSRGTGFAATSKKKALPKAEIFPCELSESTKQQLKAAVDYAVAMLGADSQPALQVEELIAVASEKGPTDDPVIQHLREIYRAIYKEYQVVTDREHDEVVKLGGLHVIGTERHEARRVDNQLRGRSGRQGDPGSTRFFLSLGDNLLRIFGGERVAGLMEAFKVEEDMPIESGLLTKSLENAQRKVETFYYDQRKQVFEYDEVMNNQRKAIYAERRRALEGQDLSAVVREYIDQTVDEIVRAHVNAERPPEEWELPALIQDLQQLIPLLENQLDAVKLGEFSAVELEEDLKSQALLAYETREEYINAIQPDLMREAERYFILNQIDTLWREHLQQMDSLREMIGLRGYGQKDPLIEYKNEGYELFLQMLVEVRRNVVFALYHFQPQYNPPIDPDYVDSEYV.

ATP is bound by residues Q104, 122-126, and D512; that span reads GEGKT.

It belongs to the SecA family. As to quaternary structure, monomer and homodimer. Part of the essential Sec protein translocation apparatus which comprises SecA, SecYEG and auxiliary proteins SecDF. Other proteins may also be involved.

It localises to the cell inner membrane. It is found in the cytoplasm. It carries out the reaction ATP + H2O + cellular proteinSide 1 = ADP + phosphate + cellular proteinSide 2.. Functionally, part of the Sec protein translocase complex. Interacts with the SecYEG preprotein conducting channel. Has a central role in coupling the hydrolysis of ATP to the transfer of proteins into and across the cell membrane, serving as an ATP-driven molecular motor driving the stepwise translocation of polypeptide chains across the membrane. This is Protein translocase subunit SecA from Gloeobacter violaceus (strain ATCC 29082 / PCC 7421).